The sequence spans 1249 residues: Minor capsid protein M1249L (1249 aa).

Belongs to the asfivirus M1249L family. As to quaternary structure, interacts with the minor capsid protein p17 and with the hexon capsid protein p72 capsomers; these interactions form a rigid zipper structure that stabilizes the capsomers. Interacts with host IRF3.

The protein resides in the virion. The protein localises to the host cytoplasm. Functionally, together with the penton and the other minor capsid proteins (p17, p49), forms a complicated network immediately below the outer capsid shell, stabilizing the whole capsid. In addition, blocks IFN-beta transactivation mediated by the cGAS-STING pathway and regulates the transcriptional activity of IFN-beta. Mechanistically, suppresses the phosphorylation of host key adapter protein TBK1 and degrades host IRF3 in the cytoplasm. This is Minor capsid protein M1249L from Ornithodoros (relapsing fever ticks).